A 687-amino-acid polypeptide reads, in one-letter code: Mediator of RNA polymerase II transcription subunit 17 (687 aa).

A compositionally biased stretch (low complexity) spans 30 to 43 (LSSNPNSSLHSPTS). 2 disordered regions span residues 30 to 70 (LSSN…NKTK) and 130 to 189 (QLGS…ETDD). 3 stretches are compositionally biased toward basic and acidic residues: residues 56–70 (TSIRLEGDELENKTK), 136–147 (SDGHNSEKKDTD), and 167–183 (KDNPVDSRNETDHKTNE).

It belongs to the Mediator complex subunit 17 family. In terms of assembly, component of the Mediator complex, which is composed of at least 21 subunits that form three structurally distinct submodules. The Mediator head module contains MED6, MED8, MED11, SRB4/MED17, SRB5/MED18, ROX3/MED19, SRB2/MED20 and SRB6/MED22, the middle module contains MED1, MED4, NUT1/MED5, MED7, CSE2/MED9, NUT2/MED10, SRB7/MED21 and SOH1/MED31, and the tail module contains MED2, PGD1/MED3, RGR1/MED14, GAL11/MED15 and SIN4/MED16. The head and the middle modules interact directly with RNA polymerase II, whereas the elongated tail module interacts with gene-specific regulatory proteins. The head module may also interact with the TFIIF complex. SRB4/MED17 interacts directly with MED6, MED11, ROX3/MED19, SRB2/MED20 and SRB6/MED22. Interacts directly with the activator GAL4.

It localises to the nucleus. Its function is as follows. Component of the Mediator complex, a coactivator involved in the regulated transcription of nearly all RNA polymerase II-dependent genes. Mediator functions as a bridge to convey information from gene-specific regulatory proteins to the basal RNA polymerase II transcription machinery. The Mediator complex, having a compact conformation in its free form, is recruited to promoters by direct interactions with regulatory proteins and serves for the assembly of a functional preinitiation complex with RNA polymerase II and the general transcription factors. The Mediator complex unfolds to an extended conformation and partially surrounds RNA polymerase II, specifically interacting with the unphosphorylated form of the C-terminal domain (CTD) of RNA polymerase II. The Mediator complex dissociates from the RNA polymerase II holoenzyme and stays at the promoter when transcriptional elongation begins. The protein is Mediator of RNA polymerase II transcription subunit 17 (SRB4) of Saccharomyces cerevisiae (strain ATCC 204508 / S288c) (Baker's yeast).